The sequence spans 400 residues: Imidazolonepropionase (400 aa).

Histidine 68 and histidine 70 together coordinate Fe(3+). Residues histidine 68 and histidine 70 each coordinate Zn(2+). Positions 77, 140, and 173 each coordinate 4-imidazolone-5-propanoate. Position 140 (tyrosine 140) interacts with N-formimidoyl-L-glutamate. Position 238 (histidine 238) interacts with Fe(3+). Zn(2+) is bound at residue histidine 238. Glutamine 241 contacts 4-imidazolone-5-propanoate. Aspartate 313 provides a ligand contact to Fe(3+). Aspartate 313 contributes to the Zn(2+) binding site. The N-formimidoyl-L-glutamate site is built by asparagine 315 and glycine 317. Threonine 318 contributes to the 4-imidazolone-5-propanoate binding site.

This sequence belongs to the metallo-dependent hydrolases superfamily. HutI family. Zn(2+) is required as a cofactor. It depends on Fe(3+) as a cofactor.

The protein localises to the cytoplasm. The catalysed reaction is 4-imidazolone-5-propanoate + H2O = N-formimidoyl-L-glutamate. Its pathway is amino-acid degradation; L-histidine degradation into L-glutamate; N-formimidoyl-L-glutamate from L-histidine: step 3/3. Its function is as follows. Catalyzes the hydrolytic cleavage of the carbon-nitrogen bond in imidazolone-5-propanoate to yield N-formimidoyl-L-glutamate. It is the third step in the universal histidine degradation pathway. The sequence is that of Imidazolonepropionase from Paracoccus denitrificans (strain Pd 1222).